We begin with the raw amino-acid sequence, 713 residues long: MLLATLLLLLLGGALAHPDRIIFPNHACEDPPAVLLEVQGTLQRPLVRDSRTSPANCTWLILGSKEQTVTIRFQKLHLACGSERLTLRSPLQPLISLCEAPPSPLQLPGGNVTITYSYAGARAPMGQGFLLSYSQDWLMCLQEEFQCLNHRCVSAVQRCDGVDACGDGSDEAGCSSDPFPGLTPRPVPSLPCNVTLEDFYGVFSSPGYTHLASVSHPQSCHWLLDPHDGRRLAVRFTALDLGFGDAVHVYDGPGPPESSRLLRSLTHFSNGKAVTVETLSGQAVVSYHTVAWSNGRGFNATYHVRGYCLPWDRPCGLGSGLGAGEGLGERCYSEAQRCDGSWDCADGTDEEDCPGCPPGHFPCGAAGTSGATACYLPADRCNYQTFCADGADERRCRHCQPGNFRCRDEKCVYETWVCDGQPDCADGSDEWDCSYVLPRKVITAAVIGSLVCGLLLVIALGCTCKLYAIRTQEYSIFAPLSRMEAEIVQQQAPPSYGQLIAQGAIPPVEDFPTENPNDNSVLGNLRSLLQILRQDMTPGGGPGARRRQRGRLMRRLVRRLRRWGLLPRTNTPARASEARSQVTPSAAPLEALDGGTGPAREGGAVGGQDGEQAPPLPIKAPLPSASTSPAPTTVPEAPGPLPSLPLEPSLLSGVVQALRGRLLPSLGPPGPTRSPPGPHTAVLALEDEDDVLLVPLAEPGVWVAEAEDEPLLT.

An N-terminal signal peptide occupies residues 1–16 (MLLATLLLLLLGGALA). At 17–440 (HPDRIIFPNH…WDCSYVLPRK (424 aa)) the chain is on the extracellular side. Disulfide bonds link Cys28-Cys57 and Cys80-Cys98. The region spanning 28–136 (CEDPPAVLLE…QGFLLSYSQD (109 aa)) is the CUB 1 domain. Asn56 carries N-linked (GlcNAc...) asparagine glycosylation. An N-linked (GlcNAc...) asparagine glycan is attached at Asn111. An LDL-receptor class A 1 domain is found at 139–175 (MCLQEEFQCLNHRCVSAVQRCDGVDACGDGSDEAGCS). Disulfide bonds link Cys140–Cys152, Cys147–Cys165, Cys159–Cys174, and Cys192–Cys220. The CUB 2 domain occupies 192–305 (CNVTLEDFYG…RGFNATYHVR (114 aa)). Residues Asn193 and Asn299 are each glycosylated (N-linked (GlcNAc...) asparagine). LDL-receptor class A domains follow at residues 307–354 (YCLP…EDCP), 355–397 (GCPP…RRCR), and 398–434 (HCQPGNFRCRDEKCVYETWVCDGQPDCADGSDEWDCS). 9 disulfides stabilise this stretch: Cys308-Cys331, Cys315-Cys344, Cys338-Cys353, Cys356-Cys374, Cys363-Cys387, Cys381-Cys396, Cys399-Cys411, Cys406-Cys424, and Cys418-Cys433. A helical membrane pass occupies residues 441–461 (VITAAVIGSLVCGLLLVIALG). The Cytoplasmic segment spans residues 462–713 (CTCKLYAIRT…AEAEDEPLLT (252 aa)). Residues 564-637 (GLLPRTNTPA…SPAPTTVPEA (74 aa)) form a disordered region. Residues 569-584 (TNTPARASEARSQVTP) show a composition bias toward polar residues. Thr596 carries the post-translational modification Phosphothreonine. Positions 621 to 636 (PLPSASTSPAPTTVPE) are enriched in low complexity.

The protein belongs to the LDLR family. In terms of tissue distribution, expressed in blood leukocyte, lung, placenta, small intestine, liver, kidney, spleen, thymus, colon, skeletal muscle and heart.

It localises to the membrane. It is found in the coated pit. Its function is as follows. Probable receptor, which is involved in the internalization of lipophilic molecules and/or signal transduction. May be involved in the uptake of lipoprotein APOE in liver. In Homo sapiens (Human), this protein is Low-density lipoprotein receptor-related protein 10 (LRP10).